Here is a 308-residue protein sequence, read N- to C-terminus: Aspartate carbamoyltransferase catalytic subunit (308 aa).

Carbamoyl phosphate contacts are provided by Arg-57 and Thr-58. Position 86 (Lys-86) interacts with L-aspartate. Carbamoyl phosphate contacts are provided by Arg-107, His-135, and Gln-138. Positions 167 and 228 each coordinate L-aspartate. Leu-267 and Pro-268 together coordinate carbamoyl phosphate.

The protein belongs to the aspartate/ornithine carbamoyltransferase superfamily. ATCase family. As to quaternary structure, heterooligomer of catalytic and regulatory chains.

It catalyses the reaction carbamoyl phosphate + L-aspartate = N-carbamoyl-L-aspartate + phosphate + H(+). It functions in the pathway pyrimidine metabolism; UMP biosynthesis via de novo pathway; (S)-dihydroorotate from bicarbonate: step 2/3. Catalyzes the condensation of carbamoyl phosphate and aspartate to form carbamoyl aspartate and inorganic phosphate, the committed step in the de novo pyrimidine nucleotide biosynthesis pathway. The chain is Aspartate carbamoyltransferase catalytic subunit from Methanosarcina acetivorans (strain ATCC 35395 / DSM 2834 / JCM 12185 / C2A).